Reading from the N-terminus, the 150-residue chain is NADH-quinone oxidoreductase subunit A (150 aa).

Transmembrane regions (helical) follow at residues 14 to 34, 66 to 86, and 96 to 116; these read FAVF…GAFF, FYLV…LYAW, and IGFI…VYLV.

This sequence belongs to the complex I subunit 3 family. NDH-1 is composed of 13 different subunits. Subunits NuoA, H, J, K, L, M, N constitute the membrane sector of the complex.

Its subcellular location is the cell inner membrane. The catalysed reaction is a quinone + NADH + 5 H(+)(in) = a quinol + NAD(+) + 4 H(+)(out). NDH-1 shuttles electrons from NADH, via FMN and iron-sulfur (Fe-S) centers, to quinones in the respiratory chain. The immediate electron acceptor for the enzyme in this species is believed to be ubiquinone. Couples the redox reaction to proton translocation (for every two electrons transferred, four hydrogen ions are translocated across the cytoplasmic membrane), and thus conserves the redox energy in a proton gradient. The protein is NADH-quinone oxidoreductase subunit A of Yersinia enterocolitica serotype O:8 / biotype 1B (strain NCTC 13174 / 8081).